The sequence spans 33 residues: uncharacterized protein (33 aa).

The Cytoplasmic portion of the chain corresponds to 1–12 (MKENKVQQISHK). The chain crosses the membrane as a helical span at residues 13–33 (LINIVVFVAIVEYAYLFLHFY).

It is found in the cell inner membrane. This is an uncharacterized protein from Escherichia coli (strain K12).